Consider the following 440-residue polypeptide: UDP-glucose 6-dehydrogenase YwqF (440 aa).

NAD(+) contacts are provided by residues 2–19, V11, D30, K35, T121, and E155; that span reads NITV…GVSL. Substrate is bound by residues 151–155, K204, N208, 249–253, and G257; these read EFLRE and FLKAG. C260 (nucleophile) is an active-site residue. Position 263 (K263) interacts with NAD(+). K320 lines the substrate pocket. Residue R327 participates in NAD(+) binding.

Belongs to the UDP-glucose/GDP-mannose dehydrogenase family. Phosphorylated on tyrosine residue(s). Phosphorylated by YwqD and dephosphorylated by YwqE in vitro.

It is found in the cytoplasm. The enzyme catalyses UDP-alpha-D-glucose + 2 NAD(+) + H2O = UDP-alpha-D-glucuronate + 2 NADH + 3 H(+). Its pathway is nucleotide-sugar biosynthesis; UDP-alpha-D-glucuronate biosynthesis; UDP-alpha-D-glucuronate from UDP-alpha-D-glucose: step 1/1. Competitively inhibited by UDP-glucose. Activated by phosphorylation, which may increase affinity for NAD(+); inhibited by dephosphorylation. Functionally, catalyzes the conversion of UDP-glucose into UDP-glucuronate, one of the precursors of teichuronic acid. This chain is UDP-glucose 6-dehydrogenase YwqF (ywqF), found in Bacillus subtilis (strain 168).